A 484-amino-acid polypeptide reads, in one-letter code: Probable chitinase 2 (484 aa).

The first 33 residues, 1–33 (MTLRSRLSGEAPQLWLLLLLASTASSLWASVAA), serve as a signal peptide directing secretion. The GH18 domain occupies 41–432 (KVVVCYVSTW…RTINEATMLA (392 aa)). Cysteines 45 and 70 form a disulfide. Chitin-binding positions include 98–99 (EE) and 125–128 (GGWN). Glu168 acts as the Proton donor in catalysis. Chitin is bound by residues Tyr169, 231-234 (MCYD), and Trp384. Ser467 carries the post-translational modification Phosphoserine.

It belongs to the glycosyl hydrolase 18 family. Chitinase class II subfamily.

It catalyses the reaction Random endo-hydrolysis of N-acetyl-beta-D-glucosaminide (1-&gt;4)-beta-linkages in chitin and chitodextrins.. The polypeptide is Probable chitinase 2 (Drosophila melanogaster (Fruit fly)).